A 472-amino-acid polypeptide reads, in one-letter code: Na(+)/H(+) antiporter NhaA (472 aa).

Transmembrane regions (helical) follow at residues 24-44 (ISGLIMLGFALTGLVLANLPA), 66-86 (LPIGHWAQDGLLTIFFLTVGL), 108-128 (LCAVGGMIAPPILFLAVTALF), 156-176 (GWAVPTATDIAFSLAVLALFA), 196-216 (LLAIILIAVFFSSINAWYWFI), 234-254 (VPWIAVGIVGILAWIMMFEAG), 290-310 (PFSALLALPIFALFATGVHFE), 312-332 (MSPLLLASPLVIALIVALVVG), 361-381 (MIPAAVACGIGFTVSFLIASL), and 392-412 (ARFGVLVASLIAAAISGVLLS). The segment at 422–472 (AAAAAADEEDDESIDGDGIGQPSHTTEPTTPTEHPGTLADGTASVEIDFRH) is disordered. Residues 427–436 (ADEEDDESID) show a composition bias toward acidic residues. A compositionally biased stretch (low complexity) spans 445 to 456 (HTTEPTTPTEHP).

This sequence belongs to the NhaA Na(+)/H(+) (TC 2.A.33) antiporter family.

The protein localises to the cell membrane. The enzyme catalyses Na(+)(in) + 2 H(+)(out) = Na(+)(out) + 2 H(+)(in). Functionally, na(+)/H(+) antiporter that extrudes sodium in exchange for external protons. This Bifidobacterium longum (strain NCC 2705) protein is Na(+)/H(+) antiporter NhaA.